A 688-amino-acid chain; its full sequence is Elongation factor G (688 aa).

In terms of domain architecture, tr-type G spans 8-282 (EKFRNFGIMA…GVVDYLPSPL (275 aa)). GTP-binding positions include 17–24 (AHIDAGKT), 81–85 (DTPGH), and 135–138 (NKMD).

The protein belongs to the TRAFAC class translation factor GTPase superfamily. Classic translation factor GTPase family. EF-G/EF-2 subfamily.

It is found in the cytoplasm. Catalyzes the GTP-dependent ribosomal translocation step during translation elongation. During this step, the ribosome changes from the pre-translocational (PRE) to the post-translocational (POST) state as the newly formed A-site-bound peptidyl-tRNA and P-site-bound deacylated tRNA move to the P and E sites, respectively. Catalyzes the coordinated movement of the two tRNA molecules, the mRNA and conformational changes in the ribosome. The polypeptide is Elongation factor G (Clostridium perfringens (strain 13 / Type A)).